Consider the following 121-residue polypeptide: Large ribosomal subunit protein bL19 (121 aa).

The protein belongs to the bacterial ribosomal protein bL19 family.

Functionally, this protein is located at the 30S-50S ribosomal subunit interface and may play a role in the structure and function of the aminoacyl-tRNA binding site. The protein is Large ribosomal subunit protein bL19 of Chlorobium phaeobacteroides (strain BS1).